An 835-amino-acid chain; its full sequence is Axin-1 (835 aa).

The tract at residues 16-60 (LGSSFTEDAPRPPVPGEEGDLVSSDGRQYNHSFYSSKSDSLKNEA) is disordered. Residues 40-53 (DGRQYNHSFYSSKS) are compositionally biased toward polar residues. Residues 92–214 (SLHSLLDDQD…LKSDIYLEYT (123 aa)) form the RGS domain. The segment at 318–349 (ATSANDSEQQSMSSDADTLSLTDSSVDGVPPY) is disordered. Residues 328–344 (SMSSDADTLSLTDSSVD) show a composition bias toward low complexity. Positions 351–436 (YRKPHRREIH…DADISTGPSL (86 aa)) are interaction with GSK3B. The segment at 437 to 512 (ANHRVPPAVH…SPDGLPAGKI (76 aa)) is interaction with beta-catenin. Disordered regions lie at residues 485–530 (KTPG…QARQ) and 602–627 (GYSS…FEMR). A compositionally biased stretch (basic and acidic residues) spans 616–627 (RKGEDGRNFEMR). The DIX domain occupies 753 to 835 (CENITVAYYF…KIIGKVEKVD (83 aa)).

As to quaternary structure, homodimer. Interacts with dixdc1. Interacts with hwa; leading to promote the tankyrase-mediated degradation of axin1. ADP-ribosylated by tankyrase tnks and tnks2. Poly-ADP-ribosylated protein is recognized by rnf146, followed by ubiquitination at 'Lys-48' and subsequent activation of the Wnt signaling pathway. Post-translationally, ubiquitinated by rnf146 when poly-ADP-ribosylated, leading to its degradation and subsequent activation of the Wnt signaling pathway.

Its subcellular location is the cytoplasm. It is found in the nucleus. The protein localises to the membrane. It localises to the cell membrane. Component of the beta-catenin destruction complex required for regulating ctnnb1 levels through phosphorylation and ubiquitination, and modulating Wnt-signaling. Controls dorsoventral patterning via two opposing effects: down-regulates ctnnb1 to inhibit the Wnt signaling pathway and ventralize embryos, but also dorsalizes embryos by activating a Wnt-independent JNK signaling pathway. This Danio rerio (Zebrafish) protein is Axin-1 (axin1).